A 435-amino-acid chain; its full sequence is E3 ubiquitin-protein ligase RING1 (435 aa).

The segment at 46-86 (CPICLDMLKKTMTTKECLHRFCSDCIVTALRSGNKECPTCR) adopts an RING-type zinc-finger fold. Positions 144–322 (KLQSQNRPQR…TEGEGNGELG (179 aa)) are disordered. Residues 157–170 (KGGGGGGGGGGNGN) are compositionally biased toward gly residues. Low complexity-rich tracts occupy residues 171 to 188 (GAAN…TAVG), 202 to 211 (SNDSNSNTNS), 222 to 251 (SGTS…TSAT), and 259 to 278 (SNPP…SSSS). A Phosphoserine modification is found at Ser202. Ser266 carries the phosphoserine modification. Position 267 is a phosphothreonine (Thr267). A Phosphoserine modification is found at Ser269. Positions 309–322 (SNIDTEGEGNGELG) are enriched in acidic residues.

Interacts with ORD. Component of PRC1 complex, which contains many PcG proteins like Pc, ph, Scm, Psc, Sce and also chromatin remodeling proteins such as histone deacetylases. This complex is distinct from the Esc/E(z) complex, at least composed of esc, E(z), Su(z)12, HDAC1/Rpd3 and Caf1-55. The two complexes however cooperate and interact together during the first 3 hours of development to establish PcG silencing. In terms of tissue distribution, ubiquitously expressed in syncytial blastoderm embryos. Ubiquitously expressed until stage 11. Then, it is only expressed in the neuroectoderm. Later in embryonic development, it is only expressed in the CNS. In larvae, it is expressed in all imaginal disks. Expressed in the male and female gonads.

It localises to the nucleus. It is found in the chromosome. It carries out the reaction S-ubiquitinyl-[E2 ubiquitin-conjugating enzyme]-L-cysteine + [acceptor protein]-L-lysine = [E2 ubiquitin-conjugating enzyme]-L-cysteine + N(6)-ubiquitinyl-[acceptor protein]-L-lysine.. It functions in the pathway protein modification; protein ubiquitination. E3 ubiquitin-protein ligase that mediates monoubiquitination of 'Lys-118' of histone H2A, thereby playing a central role in histone code and gene regulation. H2A 'Lys-118' ubiquitination gives a specific tag for epigenetic transcriptional repression. Polycomb group (PcG) protein. PcG proteins act by forming multiprotein complexes, which are required to maintain the transcriptionally repressive state of homeotic genes throughout development. PcG proteins are not required to initiate repression, but to maintain it during later stages of development. PcG complexes act via modification of histones, such as methylation, deacetylation, ubiquitination rendering chromatin heritably changed in its expressibility. May play a role in meiotic sister chromatid cohesion. The polypeptide is E3 ubiquitin-protein ligase RING1 (Sce) (Drosophila melanogaster (Fruit fly)).